Here is a 150-residue protein sequence, read N- to C-terminus: Large ribosomal subunit protein bL9 (150 aa).

This sequence belongs to the bacterial ribosomal protein bL9 family.

In terms of biological role, binds to the 23S rRNA. The protein is Large ribosomal subunit protein bL9 of Pseudoalteromonas translucida (strain TAC 125).